Consider the following 92-residue polypeptide: Phospholemman (92 aa).

Positions 1 to 20 (MASLSHILVLCVGLLAMVNA) are cleaved as a signal peptide. Residues 21–35 (EAPQEHDPFTYDYQS) are Extracellular-facing. Residues 36–56 (LRIGGLIIAGILFILGILIVL) traverse the membrane as a helical segment. The Cytoplasmic segment spans residues 57-92 (SRRCRCKFNQQQRTGEPDEEEGTFRSSIRRLSTRRR). Cysteine 60 carries S-palmitoyl cysteine lipidation. S-glutathionyl cysteine; alternate is present on cysteine 62. The S-palmitoyl cysteine; alternate moiety is linked to residue cysteine 62. The disordered stretch occupies residues 65-92 (NQQQRTGEPDEEEGTFRSSIRRLSTRRR). Position 79 is a phosphothreonine (threonine 79). Phosphoserine is present on serine 82. Serine 83 is modified (phosphoserine; by PKA and PKC). Over residues 83–92 (SIRRLSTRRR) the composition is skewed to basic residues. Serine 88 carries the post-translational modification Phosphoserine; by PKA. Position 89 is a phosphothreonine; by PKC (threonine 89).

This sequence belongs to the FXYD family. As to quaternary structure, homotetramer. Monomer. Regulatory subunit of the sodium/potassium-transporting ATPase (NKA) which is composed of a catalytic alpha subunit, an auxiliary non-catalytic beta subunit and an additional regulatory subunit. The monomeric form associates with NKA while the oligomeric form does not. Interacts with the catalytic alpha-1 subunit ATP1A1. Also interacts with the catalytic alpha-2 and alpha-3 subunits ATP1A2 and ATP1A3. Very little interaction with ATP1A1, ATP1A2 or ATP1A3 when phosphorylated at Ser-83. Interacts with the non-catalytic beta-1 subunit ATP1B1. Oxidative stress decreases interaction with ATP1A1 but increases interaction with ATP1B1. Major plasma membrane substrate for cAMP-dependent protein kinase (PKA) and protein kinase C (PKC) in several different tissues. Phosphorylated in response to insulin and adrenergic stimulation. Phosphorylation at Ser-88 stimulates sodium/potassium-transporting ATPase activity while the unphosphorylated form inhibits sodium/potassium-transporting ATPase activity. Phosphorylation increases tetramerization, decreases binding to ATP1A1 and reduces inhibition of ATP1A1 activity. Phosphorylation at Ser-83 leads to greatly reduced interaction with ATP1A1, ATP1A2 and ATP1A3. May be phosphorylated by DMPK. Post-translationally, palmitoylation increases half-life and stability and is enhanced upon phosphorylation at Ser-88 by PKA. In terms of tissue distribution, in the brain, detected in cerebellum and choroid plexus (at protein level).

It localises to the cell membrane. It is found in the sarcolemma. The protein resides in the apical cell membrane. Its subcellular location is the membrane. The protein localises to the caveola. It localises to the T-tubule. In terms of biological role, associates with and regulates the activity of the sodium/potassium-transporting ATPase (NKA) which transports Na(+) out of the cell and K(+) into the cell. Inhibits NKA activity in its unphosphorylated state and stimulates activity when phosphorylated. Reduces glutathionylation of the NKA beta-1 subunit ATP1B1, thus reversing glutathionylation-mediated inhibition of ATP1B1. Contributes to female sexual development by maintaining the excitability of neurons which secrete gonadotropin-releasing hormone. In Bos taurus (Bovine), this protein is Phospholemman.